The following is a 541-amino-acid chain: ATP synthase subunit alpha (541 aa).

Residue Gly-173–Thr-180 participates in ATP binding. Over residues Gly-517–Ser-527 the composition is skewed to basic and acidic residues. Residues Gly-517–Lys-541 are disordered. The span at Ala-532–Lys-541 shows a compositional bias: polar residues.

It belongs to the ATPase alpha/beta chains family. In terms of assembly, F-type ATPases have 2 components, CF(1) - the catalytic core - and CF(0) - the membrane proton channel. CF(1) has five subunits: alpha(3), beta(3), gamma(1), delta(1), epsilon(1). CF(0) has three main subunits: a(1), b(2) and c(9-12). The alpha and beta chains form an alternating ring which encloses part of the gamma chain. CF(1) is attached to CF(0) by a central stalk formed by the gamma and epsilon chains, while a peripheral stalk is formed by the delta and b chains.

It is found in the cell membrane. It carries out the reaction ATP + H2O + 4 H(+)(in) = ADP + phosphate + 5 H(+)(out). Functionally, produces ATP from ADP in the presence of a proton gradient across the membrane. The alpha chain is a regulatory subunit. The sequence is that of ATP synthase subunit alpha from Kocuria rhizophila (strain ATCC 9341 / DSM 348 / NBRC 103217 / DC2201).